The primary structure comprises 362 residues: Peptide chain release factor 1 (362 aa).

Gln-235 carries the post-translational modification N5-methylglutamine.

This sequence belongs to the prokaryotic/mitochondrial release factor family. Post-translationally, methylated by PrmC. Methylation increases the termination efficiency of RF1.

Its subcellular location is the cytoplasm. In terms of biological role, peptide chain release factor 1 directs the termination of translation in response to the peptide chain termination codons UAG and UAA. The sequence is that of Peptide chain release factor 1 from Acinetobacter baumannii (strain AYE).